The sequence spans 69 residues: Conotoxin reg3.6 (69 aa).

An N-terminal signal peptide occupies residues 1–20 (MMSKLGVLLTICLLLFPLSA). Residues 21–52 (LPLDGDQPADQPAERVQDISPDQNPLFHLVKR) constitute a propeptide that is removed on maturation. 3 disulfides stabilise this stretch: Cys54-Cys68, Cys55-Cys66, and Cys60-Cys69.

The protein belongs to the conotoxin M superfamily. As to expression, expressed by the venom duct.

Its subcellular location is the secreted. This Conus regius (Crown cone) protein is Conotoxin reg3.6.